We begin with the raw amino-acid sequence, 345 residues long: 3-isopropylmalate dehydrogenase (345 aa).

Position 74 to 87 (74 to 87) interacts with NAD(+); that stretch reads GPKWDGLPRKIRPE. Substrate-binding residues include Arg94, Arg104, Arg132, and Asp217. Mg(2+)-binding residues include Asp217, Asp241, and Asp245. 274-286 contacts NAD(+); the sequence is GSAPDIAGKGIAN.

It belongs to the isocitrate and isopropylmalate dehydrogenases family. LeuB type 1 subfamily. Homodimer. Mg(2+) serves as cofactor. The cofactor is Mn(2+).

It is found in the cytoplasm. It carries out the reaction (2R,3S)-3-isopropylmalate + NAD(+) = 4-methyl-2-oxopentanoate + CO2 + NADH. Its pathway is amino-acid biosynthesis; L-leucine biosynthesis; L-leucine from 3-methyl-2-oxobutanoate: step 3/4. Its function is as follows. Catalyzes the oxidation of 3-carboxy-2-hydroxy-4-methylpentanoate (3-isopropylmalate) to 3-carboxy-4-methyl-2-oxopentanoate. The product decarboxylates to 4-methyl-2 oxopentanoate. The protein is 3-isopropylmalate dehydrogenase (leuB) of Thermus thermophilus (strain ATCC 27634 / DSM 579 / HB8).